We begin with the raw amino-acid sequence, 393 residues long: Interleukin-1 receptor type 2 (393 aa).

A signal peptide spans 1–13; it reads MFRLYVLVMGVSA. At 14 to 347 the chain is on the extracellular side; it reads FTLQPAAHTG…RTTVKEPPPT (334 aa). 3 cysteine pairs are disulfide-bonded: C28-C116, C50-C108, and C152-C207. 3 consecutive Ig-like C2-type domains span residues 29–120, 134–221, and 237–342; these read PVRG…DKVS, PFIS…YNIT, and PVII…TTVK. N66, N72, and N112 each carry an N-linked (GlcNAc...) asparagine glycan. N219 and N277 each carry an N-linked (GlcNAc...) asparagine glycan. C258 and C326 are joined by a disulfide. The chain crosses the membrane as a helical span at residues 348 to 368; it reads FSWGIVLAPLALAFLVLGGIW. Residues 369–393 lie on the Cytoplasmic side of the membrane; sequence MHRRCKHRTGKADGLTVLRPHHQDF.

This sequence belongs to the interleukin-1 receptor family. Forms a non-signaling receptor complex consisting of IL1R2 and IL1RAP. A soluble form (sIL1R2) can also be produced by proteolytic cleavage at the cell surface (shedding) involving a metalloproteinase.

The protein localises to the secreted. It localises to the cell membrane. Non-signaling receptor for IL1A, IL1B and IL1RN. Reduces IL1B activities. Serves as a decoy receptor by competitive binding to IL1B and preventing its binding to IL1R1. Also modulates cellular response through non-signaling association with IL1RAP after binding to IL1B. IL1R2 (membrane and secreted forms) preferentially binds IL1B and poorly IL1A and IL1RN. The secreted IL1R2 recruits secreted IL1RAP with high affinity; this complex formation may be the dominant mechanism for neutralization of IL1B by secreted/soluble receptors. The sequence is that of Interleukin-1 receptor type 2 (IL1R2) from Chlorocebus aethiops (Green monkey).